Here is a 168-residue protein sequence, read N- to C-terminus: Large ribosomal subunit protein bL9 (168 aa).

The interval 148-168 is disordered; the sequence is ENGEGSVQPAAEAAEVASTEA. Residues 157-168 are compositionally biased toward low complexity; it reads AAEAAEVASTEA.

This sequence belongs to the bacterial ribosomal protein bL9 family.

Binds to the 23S rRNA. The protein is Large ribosomal subunit protein bL9 of Herpetosiphon aurantiacus (strain ATCC 23779 / DSM 785 / 114-95).